The chain runs to 1574 residues: Synaptojanin-1 (1574 aa).

Residues Val119–Gly442 form the SAC domain. Ser820 and Ser830 each carry phosphoserine. Positions Gly894–Pro971 constitute an RRM domain. Over residues His1029–Pro1054 the composition is skewed to low complexity. Residues His1029 to Ser1327 form a disordered region. Residue Ser1053 is modified to Phosphoserine. Positions Ser1080–Leu1100 are enriched in polar residues. Pro residues predominate over residues Pro1105–Ser1127. 2 positions are modified to phosphoserine: Ser1147 and Ser1175. The residue at position 1198 (Arg1198) is an Omega-N-methylarginine. Thr1217 carries the post-translational modification Phosphothreonine. Positions Thr1268–Arg1287 are enriched in pro residues. Positions Ser1288–Pro1307 are enriched in low complexity. Phosphoserine is present on residues Ser1290 and Ser1350. Thr1354 carries the phosphothreonine modification. 2 disordered regions span residues Leu1363–Pro1507 and Leu1532–Arg1574. Composition is skewed to polar residues over residues Pro1364 to Cys1379, Gln1393 to Pro1402, Arg1424 to Leu1436, and Asp1472 to Pro1484. Residues Phe1403–Val1425 form a 3 X 3 AA repeats of N-P-F region. Over residues Arg1535–Pro1548 the composition is skewed to pro residues. Residues Pro1549–Ser1563 are compositionally biased toward low complexity. Residues Ala1565 to Arg1574 are compositionally biased toward polar residues.

It belongs to the synaptojanin family. The protein in the central section; belongs to the inositol 1,4,5-trisphosphate 5-phosphatase family. In terms of assembly, interacts with ASH/GRB2. Interacts with PACSIN1, PACSIN2 and PACSIN3. Interacts with AMPH, SH3GL1, SH3GL2 and SH3GL3. Interacts with MYO1E (via SH3 domain). Interacts with BIN1 and DNM1. Interacts with EPS15.

It localises to the cytoplasm. The protein resides in the perinuclear region. The enzyme catalyses a 1,2-diacyl-sn-glycero-3-phospho-(1D-myo-inositol-4,5-bisphosphate) + H2O = a 1,2-diacyl-sn-glycero-3-phospho-(1D-myo-inositol 4-phosphate) + phosphate. Functionally, phosphatase that acts on various phosphoinositides, including phosphatidylinositol 4-phosphate, phosphatidylinositol (4,5)-bisphosphate and phosphatidylinositol (3,4,5)-trisphosphate. Has a role in clathrin-mediated endocytosis. Hydrolyzes PIP2 bound to actin regulatory proteins resulting in the rearrangement of actin filaments downstream of tyrosine kinase and ASH/GRB2. The sequence is that of Synaptojanin-1 (Synj1) from Mus musculus (Mouse).